Consider the following 411-residue polypeptide: Common plant regulatory factor 1 (411 aa).

Residues 1–14 (MGNTDDVKAVKPEK) are compositionally biased toward basic and acidic residues. Disordered stretches follow at residues 1–30 (MGNTDDVKAVKPEKLSSPPPPAAPDQSNSH), 130–197 (AMSI…SSVI), and 232–293 (SSLE…KQAE). Polar residues predominate over residues 148-164 (TLSQSKETEGSSDGSNE). The span at 235 to 244 (ELKDSPKEHA) shows a compositional bias: basic and acidic residues. A compositionally biased stretch (polar residues) spans 249–259 (AGGQQPSTMMP). A compositionally biased stretch (basic and acidic residues) spans 264-293 (LHNDRDLKRERRKQSNRESARRSRLRKQAE). The region spanning 269 to 332 (DLKRERRKQS…EKLTNDNSRL (64 aa)) is the bZIP domain. The segment at 271-290 (KRERRKQSNRESARRSRLRK) is basic motif. The leucine-zipper stretch occupies residues 297–332 (LAIKVDSLTAENMALKAEINRLTLTAEKLTNDNSRL). Residues 346–411 (DVGLGNNNEK…NPRTDAVAAG (66 aa)) are disordered.

Belongs to the bZIP family. As to quaternary structure, binds DNA as a dimer.

It localises to the nucleus. Its function is as follows. Binds to the G-box-like motif (5'-ACGTGGC-3') of the chalcone synthase (CHS) gene promoter. G-box and G-box-like motifs are defined in promoters of certain plant genes which are regulated by such diverse stimuli as light-induction or hormone control. The polypeptide is Common plant regulatory factor 1 (CPRF1) (Petroselinum crispum (Parsley)).